The primary structure comprises 493 residues: Acetyl-coenzyme A carboxylase carboxyl transferase subunit beta (493 aa).

Residues 231 to 493 enclose the CoA carboxyltransferase N-terminal domain; the sequence is LWVQCENCYG…FKLHAFFPLN (263 aa). 4 residues coordinate Zn(2+): Cys235, Cys238, Cys254, and Cys257. The C4-type zinc finger occupies 235 to 257; sequence CENCYGLNYKKFLKSKINLCEQC.

This sequence belongs to the AccD/PCCB family. In terms of assembly, acetyl-CoA carboxylase is a heterohexamer composed of biotin carboxyl carrier protein, biotin carboxylase and 2 subunits each of ACCase subunit alpha and ACCase plastid-coded subunit beta (accD). Requires Zn(2+) as cofactor.

The protein resides in the plastid stroma. The catalysed reaction is N(6)-carboxybiotinyl-L-lysyl-[protein] + acetyl-CoA = N(6)-biotinyl-L-lysyl-[protein] + malonyl-CoA. It participates in lipid metabolism; malonyl-CoA biosynthesis; malonyl-CoA from acetyl-CoA: step 1/1. Functionally, component of the acetyl coenzyme A carboxylase (ACC) complex. Biotin carboxylase (BC) catalyzes the carboxylation of biotin on its carrier protein (BCCP) and then the CO(2) group is transferred by the transcarboxylase to acetyl-CoA to form malonyl-CoA. This is Acetyl-coenzyme A carboxylase carboxyl transferase subunit beta from Epifagus virginiana (Beechdrops).